The sequence spans 365 residues: Phospho-N-acetylmuramoyl-pentapeptide-transferase (365 aa).

Helical transmembrane passes span 15–35 (PSGT…AVLI), 51–71 (VPVL…VPLL), 96–116 (TMGG…FAGF), 121–141 (IAVA…DWQV), 156–176 (LILQ…TAPE), 180–200 (ITFF…LAGF), 217–237 (GLAG…ALPA), 238–258 (HPGL…FIYH), 279–299 (LAAA…SGIF), and 344–364 (TQIV…SFIL).

This sequence belongs to the glycosyltransferase 4 family. MraY subfamily. Requires Mg(2+) as cofactor.

The protein localises to the cell inner membrane. It catalyses the reaction UDP-N-acetyl-alpha-D-muramoyl-L-alanyl-gamma-D-glutamyl-meso-2,6-diaminopimeloyl-D-alanyl-D-alanine + di-trans,octa-cis-undecaprenyl phosphate = di-trans,octa-cis-undecaprenyl diphospho-N-acetyl-alpha-D-muramoyl-L-alanyl-D-glutamyl-meso-2,6-diaminopimeloyl-D-alanyl-D-alanine + UMP. It participates in cell wall biogenesis; peptidoglycan biosynthesis. In terms of biological role, catalyzes the initial step of the lipid cycle reactions in the biosynthesis of the cell wall peptidoglycan: transfers peptidoglycan precursor phospho-MurNAc-pentapeptide from UDP-MurNAc-pentapeptide onto the lipid carrier undecaprenyl phosphate, yielding undecaprenyl-pyrophosphoryl-MurNAc-pentapeptide, known as lipid I. The polypeptide is Phospho-N-acetylmuramoyl-pentapeptide-transferase (Picosynechococcus sp. (strain ATCC 27264 / PCC 7002 / PR-6) (Agmenellum quadruplicatum)).